Reading from the N-terminus, the 122-residue chain is Large ribosomal subunit protein uL14 (122 aa).

It belongs to the universal ribosomal protein uL14 family. In terms of assembly, part of the 50S ribosomal subunit. Forms a cluster with proteins L3 and L19. In the 70S ribosome, L14 and L19 interact and together make contacts with the 16S rRNA in bridges B5 and B8.

Its function is as follows. Binds to 23S rRNA. Forms part of two intersubunit bridges in the 70S ribosome. The polypeptide is Large ribosomal subunit protein uL14 (Pseudomonas paraeruginosa (strain DSM 24068 / PA7) (Pseudomonas aeruginosa (strain PA7))).